The following is a 377-amino-acid chain: tRNA-specific 2-thiouridylase MnmA (377 aa).

ATP is bound by residues 9 to 16 (AMSGGVDS) and leucine 35. Cysteine 105 functions as the Nucleophile in the catalytic mechanism. The cysteines at positions 105 and 201 are disulfide-linked. Glycine 129 contributes to the ATP binding site. The segment at 151–153 (KNQ) is interaction with tRNA. Cysteine 201 acts as the Cysteine persulfide intermediate in catalysis. The interval 307-308 (RY) is interaction with tRNA.

The protein belongs to the MnmA/TRMU family.

It is found in the cytoplasm. The enzyme catalyses S-sulfanyl-L-cysteinyl-[protein] + uridine(34) in tRNA + AH2 + ATP = 2-thiouridine(34) in tRNA + L-cysteinyl-[protein] + A + AMP + diphosphate + H(+). Catalyzes the 2-thiolation of uridine at the wobble position (U34) of tRNA, leading to the formation of s(2)U34. In Leptospira borgpetersenii serovar Hardjo-bovis (strain JB197), this protein is tRNA-specific 2-thiouridylase MnmA.